The primary structure comprises 68 residues: Pantinin-3 (68 aa).

An N-terminal signal peptide occupies residues 1–23; it reads MKTQFAILLIALVLFQLLSQSDA. Leu-36 is modified (leucine amide). Positions 40 to 68 are excised as a propeptide; the sequence is GLNELDNLDELFDGEISQADIDFLKELMS.

The protein belongs to the non-disulfide-bridged peptide (NDBP) superfamily. Short antimicrobial peptide (group 4) family. Expressed by the venom gland.

The protein localises to the secreted. The protein resides in the target cell membrane. In terms of biological role, amphipathic peptide that possesses relatively strong activities against Gram-positive bacteria and a fungus, but has very weak antimicrobial activities against Gram-negative bacteria. Also exhibits mild hemolytic activities against human erythrocytes (16 uM induce 70% of hemolysis). Furthermore, this peptide potently inhibits the growth of vancomycin-resistant Enterococcus (VRE) S13, a pathogen that can cause a number of human infections. Minimal inhibitory concentration (MIC) are the following: 16 uM against S.aureus, 6 uM against B.magaterium, 8 uM against M.luteus, 4 uM against VRE, 12 uM against methicillin-resistant S.aureus, 36 uM against E.coli, &gt;87 uM against P.putida, 87 uM against K.oxytoca, &gt;87 uM against E.cloacae, 84 uM against S.enterica and 17 uM against the fungus C.tropicalis. The chain is Pantinin-3 from Pandinus imperator (Emperor scorpion).